Consider the following 217-residue polypeptide: Outer-membrane lipoprotein LolB (217 aa).

A signal peptide spans 1–20 (MSKALRTLALSGLVLVGLSA). C21 carries N-palmitoyl cysteine lipidation. A lipid anchor (S-diacylglycerol cysteine) is attached at C21.

Belongs to the LolB family. In terms of assembly, monomer.

The protein resides in the cell outer membrane. In terms of biological role, plays a critical role in the incorporation of lipoproteins in the outer membrane after they are released by the LolA protein. This is Outer-membrane lipoprotein LolB from Xanthomonas oryzae pv. oryzae (strain MAFF 311018).